Consider the following 121-residue polypeptide: Large ribosomal subunit protein bL20 (121 aa).

It belongs to the bacterial ribosomal protein bL20 family.

Functionally, binds directly to 23S ribosomal RNA and is necessary for the in vitro assembly process of the 50S ribosomal subunit. It is not involved in the protein synthesizing functions of that subunit. In Dinoroseobacter shibae (strain DSM 16493 / NCIMB 14021 / DFL 12), this protein is Large ribosomal subunit protein bL20.